We begin with the raw amino-acid sequence, 451 residues long: Cyclin-dependent kinase 18 (451 aa).

The interval 39 to 61 is disordered; that stretch reads RNEDGRDEPGQLSPGVQYQQRQN. Residue serine 51 is modified to Phosphoserine. The segment covering 52–61 has biased composition (polar residues); it reads PGVQYQQRQN. Serine 66 and serine 109 each carry phosphoserine. The Protein kinase domain maps to 121–402; sequence YVKLDKLGEG…AEAALSHPYF (282 aa). ATP is bound by residues 127–135 and lysine 150; that span reads LGEGTYATV. Catalysis depends on aspartate 242, which acts as the Proton acceptor. 2 positions are modified to phosphoserine: serine 417 and serine 420.

This sequence belongs to the protein kinase superfamily. CMGC Ser/Thr protein kinase family. CDC2/CDKX subfamily. As to expression, in brain, kidney, intestine and at a much lower level, in fetal tissues.

The enzyme catalyses L-seryl-[protein] + ATP = O-phospho-L-seryl-[protein] + ADP + H(+). The catalysed reaction is L-threonyl-[protein] + ATP = O-phospho-L-threonyl-[protein] + ADP + H(+). May play a role in signal transduction cascades in terminally differentiated cells. In Rattus norvegicus (Rat), this protein is Cyclin-dependent kinase 18 (Cdk18).